The sequence spans 687 residues: Hemin receptor (687 aa).

An N-terminal signal peptide occupies residues 1 to 28 (MPRSTSDRFRWSPLSLAIACTLSLAVQA). The TonB box signature appears at 44 to 51 (DTMVVTAT). The 112-residue stretch at 56–167 (SSFEAPMMVT…LGGVISYETV (112 aa)) folds into the TBDR plug domain. A TBDR beta-barrel domain is found at 178 to 687 (NSGYRVYSAA…NAKFFVSYQW (510 aa)). The interval 319–338 (ARPQGTPEEGRKQTTKGGKL) is disordered. Residues 326–338 (EEGRKQTTKGGKL) show a composition bias toward basic and acidic residues. The TonB C-terminal box signature appears at 670 to 687 (QGVPQDGRNAKFFVSYQW).

Belongs to the TonB-dependent receptor family.

Its subcellular location is the cell outer membrane. Its function is as follows. This protein is involved in the initial step of iron uptake by binding hemin, an iron chelatin siderophore that allows the bacteria to extract iron from the environment. This is Hemin receptor (hemR) from Yersinia enterocolitica.